The primary structure comprises 118 residues: MPRVKRGVTARARHKKVLNAAKGYYGARSRIYRVAVQAVTKAGQYAYRDRRQKKRQFRQLWIVRINAAARLNGLSYSRFINGLKKASIEIDRKILSDIAVHDKATFTALVEKAKAALA.

Belongs to the bacterial ribosomal protein bL20 family.

Binds directly to 23S ribosomal RNA and is necessary for the in vitro assembly process of the 50S ribosomal subunit. It is not involved in the protein synthesizing functions of that subunit. This chain is Large ribosomal subunit protein bL20, found in Tolumonas auensis (strain DSM 9187 / NBRC 110442 / TA 4).